A 21-amino-acid chain; its full sequence is Hemocyanin subunit 1 (21 aa).

Belongs to the tyrosinase family. Hemocyanin subfamily. As to expression, hemolymph.

It localises to the secreted. Its subcellular location is the extracellular space. Functionally, hemocyanins are copper-containing oxygen carriers occurring freely dissolved in the hemolymph of many mollusks and arthropods. In Maja squinado (Mediterranean spider crab), this protein is Hemocyanin subunit 1.